We begin with the raw amino-acid sequence, 159 residues long: Small ribosomal subunit protein bS6 (159 aa).

Positions 93–151 are enriched in basic and acidic residues; the sequence is VDEHEEGPSAMMRKADRDRERDDRGPREGGFRGDREGRGDREGGGFRGDRGPRRPREDA. Residues 93-159 form a disordered region; the sequence is VDEHEEGPSA…DADTAAASEE (67 aa).

Belongs to the bacterial ribosomal protein bS6 family.

Binds together with bS18 to 16S ribosomal RNA. The sequence is that of Small ribosomal subunit protein bS6 from Rhodopseudomonas palustris (strain HaA2).